Reading from the N-terminus, the 258-residue chain is Probable F-box protein At2g29610 (258 aa).

Residues Met-1–Glu-25 form a disordered region. Low complexity predominate over residues Pro-8–Pro-20. An F-box domain is found at Leu-28–Thr-74.

This is Probable F-box protein At2g29610 from Arabidopsis thaliana (Mouse-ear cress).